The following is a 316-amino-acid chain: MNDVSKTGLPKAIFLMGPTASGKTALAIRLRQTLPVELISVDSALVYKGMDIGTAKPDAHELSQAPHRLLDIIDPAQAYSAADFRRDALQAMAEIVAAGRIPLLVGGTMLYFKALLEGLSPLPSADPTIRAEIERQAAEQGWDALHRKLQDIDPVAAQRIHPNDPQRLSRALEVFFISGKTLTELTQTSGEALPYQVHQFAIAPASRELLHQRIEQRFHQMLASGFEAEVRALFARGDLHTDMPSVRCVGYRQMWSYLAGEISYDEMVYRGICATRQLAKRQITWLRGWEGVHWLDSEKPEQAYSDVLQVIGAKQQ.

17–24 (GPTASGKT) is an ATP binding site. Residue 19–24 (TASGKT) coordinates substrate. Interaction with substrate tRNA regions lie at residues 42 to 45 (DSAL), 166 to 170 (QRLSR), 247 to 252 (RCVGYR), and 280 to 287 (KRQITWLR).

This sequence belongs to the IPP transferase family. Monomer. Mg(2+) is required as a cofactor.

The enzyme catalyses adenosine(37) in tRNA + dimethylallyl diphosphate = N(6)-dimethylallyladenosine(37) in tRNA + diphosphate. Functionally, catalyzes the transfer of a dimethylallyl group onto the adenine at position 37 in tRNAs that read codons beginning with uridine, leading to the formation of N6-(dimethylallyl)adenosine (i(6)A). The sequence is that of tRNA dimethylallyltransferase from Cronobacter sakazakii (strain ATCC BAA-894) (Enterobacter sakazakii).